Consider the following 548-residue polypeptide: Glucose-6-phosphate isomerase (548 aa).

E355 serves as the catalytic Proton donor. Residues H386 and K514 contribute to the active site.

This sequence belongs to the GPI family.

It is found in the cytoplasm. It carries out the reaction alpha-D-glucose 6-phosphate = beta-D-fructose 6-phosphate. Its pathway is carbohydrate biosynthesis; gluconeogenesis. It participates in carbohydrate degradation; glycolysis; D-glyceraldehyde 3-phosphate and glycerone phosphate from D-glucose: step 2/4. Its function is as follows. Catalyzes the reversible isomerization of glucose-6-phosphate to fructose-6-phosphate. This Photorhabdus laumondii subsp. laumondii (strain DSM 15139 / CIP 105565 / TT01) (Photorhabdus luminescens subsp. laumondii) protein is Glucose-6-phosphate isomerase.